The primary structure comprises 196 residues: 3-isopropylmalate dehydratase small subunit (196 aa).

Belongs to the LeuD family. LeuD type 1 subfamily. In terms of assembly, heterodimer of LeuC and LeuD.

It catalyses the reaction (2R,3S)-3-isopropylmalate = (2S)-2-isopropylmalate. The protein operates within amino-acid biosynthesis; L-leucine biosynthesis; L-leucine from 3-methyl-2-oxobutanoate: step 2/4. Functionally, catalyzes the isomerization between 2-isopropylmalate and 3-isopropylmalate, via the formation of 2-isopropylmaleate. The chain is 3-isopropylmalate dehydratase small subunit from Corynebacterium efficiens (strain DSM 44549 / YS-314 / AJ 12310 / JCM 11189 / NBRC 100395).